The chain runs to 182 residues: Endoribonuclease YbeY (182 aa).

Zn(2+)-binding residues include histidine 115, histidine 119, and histidine 125.

It belongs to the endoribonuclease YbeY family. The cofactor is Zn(2+).

The protein resides in the cytoplasm. Its function is as follows. Single strand-specific metallo-endoribonuclease involved in late-stage 70S ribosome quality control and in maturation of the 3' terminus of the 16S rRNA. This is Endoribonuclease YbeY from Bifidobacterium longum subsp. infantis (strain ATCC 15697 / DSM 20088 / JCM 1222 / NCTC 11817 / S12).